Here is a 233-residue protein sequence, read N- to C-terminus: MVSFTSIVTAVVALAGSALAIPAPDGNMTGFPFEQLMRRQSTPSSTGRHNGYYYSWWTDGASPVQYQNGNGGSYSVQWQSGGNFVGGKGWMPGGSKSITYSGTFNPVNNGNAYLCIYGWTQNPLVEYYILENYGEYNPGNSAQSRGTLQAAGGTYTLHESTRVNQPSIEGTRTFQQYWAIRQQKRNSGTVNTGEFFQAWERAGMRMGNHNYMIVATEGYRSAGNSNINVQTPA.

Positions 1 to 20 are cleaved as a signal peptide; that stretch reads MVSFTSIVTAVVALAGSALA. Asn-27 carries N-linked (GlcNAc...) asparagine glycosylation. Positions 40–230 constitute a GH11 domain; it reads QSTPSSTGRH…SAGNSNINVQ (191 aa). The active-site Nucleophile is the Glu-126. The Proton donor role is filled by Glu-217.

Belongs to the glycosyl hydrolase 11 (cellulase G) family.

It localises to the secreted. The catalysed reaction is Endohydrolysis of (1-&gt;4)-beta-D-xylosidic linkages in xylans.. The protein operates within glycan degradation; xylan degradation. Functionally, endo-1,4-beta-xylanase involved in the hydrolysis of xylan, a major structural heterogeneous polysaccharide found in plant biomass representing the second most abundant polysaccharide in the biosphere, after cellulose. Accounts for approximately 70 percent of the endoxylanase activity in the culture filtrate. The protein is Endo-1,4-beta-xylanase 1 (XYL1) of Pyricularia grisea (Crabgrass-specific blast fungus).